A 475-amino-acid polypeptide reads, in one-letter code: Ribulose bisphosphate carboxylase large chain (475 aa).

Residues 1–2 constitute a propeptide that is removed on maturation; the sequence is MS. Residue Pro-3 is modified to N-acetylproline. Lys-14 carries the post-translational modification N6,N6,N6-trimethyllysine. Substrate-binding residues include Asn-123 and Thr-173. Lys-175 serves as the catalytic Proton acceptor. Lys-177 lines the substrate pocket. Mg(2+)-binding residues include Lys-201, Asp-203, and Glu-204. N6-carboxylysine is present on Lys-201. His-294 acts as the Proton acceptor in catalysis. Residues Arg-295, His-327, and Ser-379 each contribute to the substrate site.

Belongs to the RuBisCO large chain family. Type I subfamily. As to quaternary structure, heterohexadecamer of 8 large chains and 8 small chains; disulfide-linked. The disulfide link is formed within the large subunit homodimers. Requires Mg(2+) as cofactor. In terms of processing, the disulfide bond which can form in the large chain dimeric partners within the hexadecamer appears to be associated with oxidative stress and protein turnover.

The protein localises to the plastid. The protein resides in the chloroplast. It carries out the reaction 2 (2R)-3-phosphoglycerate + 2 H(+) = D-ribulose 1,5-bisphosphate + CO2 + H2O. The enzyme catalyses D-ribulose 1,5-bisphosphate + O2 = 2-phosphoglycolate + (2R)-3-phosphoglycerate + 2 H(+). RuBisCO catalyzes two reactions: the carboxylation of D-ribulose 1,5-bisphosphate, the primary event in carbon dioxide fixation, as well as the oxidative fragmentation of the pentose substrate in the photorespiration process. Both reactions occur simultaneously and in competition at the same active site. The protein is Ribulose bisphosphate carboxylase large chain of Psilotum nudum (Whisk fern).